Reading from the N-terminus, the 457-residue chain is Succinate-semialdehyde dehydrogenase [NADP(+)] (457 aa).

NADP(+) is bound by residues Trp133–Asn134, Lys157–Ser160, and Gly209–Ser210. The active-site Proton acceptor is Glu231. Leu232 serves as a coordination point for NADP(+). Cys265 serves as the catalytic Nucleophile. Glu362 contributes to the NADP(+) binding site.

Belongs to the aldehyde dehydrogenase family.

It carries out the reaction succinate semialdehyde + NADP(+) + H2O = succinate + NADPH + 2 H(+). In terms of biological role, catalyzes the NADP(+)-dependent oxidation of succinate semialdehyde to succinate. It is believed to be the main source of succinate semialdehyde dehydrogenase activity in Mycobacterium. This is Succinate-semialdehyde dehydrogenase [NADP(+)] (gabD1) from Mycobacterium leprae (strain TN).